We begin with the raw amino-acid sequence, 49 residues long: Large ribosomal subunit protein bL33 (49 aa).

The protein belongs to the bacterial ribosomal protein bL33 family.

The protein is Large ribosomal subunit protein bL33 of Clostridium acetobutylicum (strain ATCC 824 / DSM 792 / JCM 1419 / IAM 19013 / LMG 5710 / NBRC 13948 / NRRL B-527 / VKM B-1787 / 2291 / W).